The chain runs to 271 residues: NH(3)-dependent NAD(+) synthetase (271 aa).

ATP is bound at residue 43-50 (GISGGQDS). Asp49 contributes to the Mg(2+) binding site. Position 137 (Arg137) interacts with deamido-NAD(+). Thr157 contributes to the ATP binding site. Residue Glu162 participates in Mg(2+) binding. 2 residues coordinate deamido-NAD(+): Lys170 and Asp177. The ATP site is built by Lys186 and Thr208. Residue 257–258 (HK) participates in deamido-NAD(+) binding.

It belongs to the NAD synthetase family. As to quaternary structure, homodimer.

The catalysed reaction is deamido-NAD(+) + NH4(+) + ATP = AMP + diphosphate + NAD(+) + H(+). Its pathway is cofactor biosynthesis; NAD(+) biosynthesis; NAD(+) from deamido-NAD(+) (ammonia route): step 1/1. Catalyzes the ATP-dependent amidation of deamido-NAD to form NAD. Uses ammonia as a nitrogen source. The protein is NH(3)-dependent NAD(+) synthetase of Exiguobacterium sibiricum (strain DSM 17290 / CCUG 55495 / CIP 109462 / JCM 13490 / 255-15).